The following is a 204-amino-acid chain: Ribonuclease HII (204 aa).

An RNase H type-2 domain is found at 1-197; the sequence is MILGIDEAGR…KNRILNPKLL (197 aa). Positions 6, 7, and 103 each coordinate a divalent metal cation.

This sequence belongs to the RNase HII family. Mn(2+) serves as cofactor. The cofactor is Mg(2+).

It is found in the cytoplasm. The enzyme catalyses Endonucleolytic cleavage to 5'-phosphomonoester.. Functionally, endonuclease that specifically degrades the RNA of RNA-DNA hybrids. This Helicobacter pylori (strain Shi470) protein is Ribonuclease HII.